Consider the following 506-residue polypeptide: GTPase Der (506 aa).

EngA-type G domains lie at proline 3–leucine 166 and isoleucine 218–threonine 391. Residues glycine 9–serine 16, aspartate 56–isoleucine 60, asparagine 118–aspartate 121, glycine 224–serine 231, aspartate 271–valine 275, and asparagine 336–aspartate 339 each bind GTP. The region spanning glutamine 392–asparagine 476 is the KH-like domain.

The protein belongs to the TRAFAC class TrmE-Era-EngA-EngB-Septin-like GTPase superfamily. EngA (Der) GTPase family. As to quaternary structure, associates with the 50S ribosomal subunit.

Its function is as follows. GTPase that plays an essential role in the late steps of ribosome biogenesis. The polypeptide is GTPase Der (Actinobacillus pleuropneumoniae serotype 3 (strain JL03)).